Reading from the N-terminus, the 220-residue chain is Nucleoside diphosphate kinase, mitochondrial (220 aa).

The transit peptide at 1-57 (MFSRFARAFPKILASGASQRTFATVQKAFANPTSKKLIVGSSLLIGSAFATTSFVAC) directs the protein to the mitochondrion. Residues lysine 80, phenylalanine 128, arginine 156, threonine 162, arginine 173, and asparagine 183 each coordinate ATP. Catalysis depends on histidine 186, which acts as the Pros-phosphohistidine intermediate.

The protein belongs to the NDK family. It depends on Mg(2+) as a cofactor.

Its subcellular location is the mitochondrion intermembrane space. It carries out the reaction a 2'-deoxyribonucleoside 5'-diphosphate + ATP = a 2'-deoxyribonucleoside 5'-triphosphate + ADP. The enzyme catalyses a ribonucleoside 5'-diphosphate + ATP = a ribonucleoside 5'-triphosphate + ADP. Functionally, major role in the synthesis of nucleoside triphosphates other than ATP. The ATP gamma phosphate is transferred to the NDP beta phosphate via a ping-pong mechanism, using a phosphorylated active-site intermediate. The chain is Nucleoside diphosphate kinase, mitochondrial (ndkM) from Dictyostelium discoideum (Social amoeba).